Consider the following 255-residue polypeptide: Small ribosomal subunit protein uS2 (255 aa).

A disordered region spans residues 232–255 (ASGRDLGASEEVPVEPALEEASEA).

The protein belongs to the universal ribosomal protein uS2 family.

The chain is Small ribosomal subunit protein uS2 from Sinorhizobium medicae (strain WSM419) (Ensifer medicae).